The sequence spans 468 residues: ATP synthase subunit beta (468 aa).

148–155 contacts ATP; that stretch reads GGAGVGKT.

This sequence belongs to the ATPase alpha/beta chains family. In terms of assembly, F-type ATPases have 2 components, CF(1) - the catalytic core - and CF(0) - the membrane proton channel. CF(1) has five subunits: alpha(3), beta(3), gamma(1), delta(1), epsilon(1). CF(0) has three main subunits: a(1), b(2) and c(9-12). The alpha and beta chains form an alternating ring which encloses part of the gamma chain. CF(1) is attached to CF(0) by a central stalk formed by the gamma and epsilon chains, while a peripheral stalk is formed by the delta and b chains.

It is found in the cell membrane. It carries out the reaction ATP + H2O + 4 H(+)(in) = ADP + phosphate + 5 H(+)(out). Its function is as follows. Produces ATP from ADP in the presence of a proton gradient across the membrane. The catalytic sites are hosted primarily by the beta subunits. In Stenotrophomonas maltophilia (strain K279a), this protein is ATP synthase subunit beta.